Consider the following 214-residue polypeptide: Nodulation protein A (214 aa).

This sequence belongs to the NodA family.

It localises to the cytoplasm. N-acyltransferase required for nodulation. Acts in the production of a small, heat-stable compound (Nod) that stimulates mitosis in various plant protoplasts. This chain is Nodulation protein A, found in Methylobacterium nodulans (strain LMG 21967 / CNCM I-2342 / ORS 2060).